Reading from the N-terminus, the 594-residue chain is DNA ligase (594 aa).

ATP is bound at residue E256. The N6-AMP-lysine intermediate role is filled by K258. ATP is bound by residues R263, R279, E309, F349, R426, and K432.

This sequence belongs to the ATP-dependent DNA ligase family. Mg(2+) is required as a cofactor.

The enzyme catalyses ATP + (deoxyribonucleotide)n-3'-hydroxyl + 5'-phospho-(deoxyribonucleotide)m = (deoxyribonucleotide)n+m + AMP + diphosphate.. Functionally, DNA ligase that seals nicks in double-stranded DNA during DNA replication, DNA recombination and DNA repair. The polypeptide is DNA ligase (Ignicoccus hospitalis (strain KIN4/I / DSM 18386 / JCM 14125)).